Here is a 258-residue protein sequence, read N- to C-terminus: Imidazole glycerol phosphate synthase subunit HisF (258 aa).

Active-site residues include Asp-11 and Asp-130.

The protein belongs to the HisA/HisF family. As to quaternary structure, heterodimer of HisH and HisF.

Its subcellular location is the cytoplasm. It catalyses the reaction 5-[(5-phospho-1-deoxy-D-ribulos-1-ylimino)methylamino]-1-(5-phospho-beta-D-ribosyl)imidazole-4-carboxamide + L-glutamine = D-erythro-1-(imidazol-4-yl)glycerol 3-phosphate + 5-amino-1-(5-phospho-beta-D-ribosyl)imidazole-4-carboxamide + L-glutamate + H(+). Its pathway is amino-acid biosynthesis; L-histidine biosynthesis; L-histidine from 5-phospho-alpha-D-ribose 1-diphosphate: step 5/9. IGPS catalyzes the conversion of PRFAR and glutamine to IGP, AICAR and glutamate. The HisF subunit catalyzes the cyclization activity that produces IGP and AICAR from PRFAR using the ammonia provided by the HisH subunit. The chain is Imidazole glycerol phosphate synthase subunit HisF from Serratia proteamaculans (strain 568).